A 121-amino-acid chain; its full sequence is Large ribosomal subunit protein bL20 (121 aa).

This sequence belongs to the bacterial ribosomal protein bL20 family.

Functionally, binds directly to 23S ribosomal RNA and is necessary for the in vitro assembly process of the 50S ribosomal subunit. It is not involved in the protein synthesizing functions of that subunit. This is Large ribosomal subunit protein bL20 (rplT) from Chlamydia pneumoniae (Chlamydophila pneumoniae).